The primary structure comprises 345 residues: Adenosine kinase 2 (345 aa).

Residue Asp300 is part of the active site.

This sequence belongs to the carbohydrate kinase PfkB family. In terms of assembly, interacts with the begomovirus AL2 protein and the curtovirus L2 protein. Interacts with KIN11. It depends on Mg(2+) as a cofactor. Phosphorylated by KIN11. In terms of tissue distribution, widely expressed.

It localises to the cytoplasm. The enzyme catalyses adenosine + ATP = AMP + ADP + H(+). It participates in purine metabolism; AMP biosynthesis via salvage pathway; AMP from adenosine: step 1/1. Its activity is regulated as follows. Inactivated by the begomovirus AL2 protein or the curtovirus L2 protein. ATP dependent phosphorylation of adenosine and other related nucleoside analogs to monophosphate derivatives. Essential to sustain methyl recycling. The polypeptide is Adenosine kinase 2 (Arabidopsis thaliana (Mouse-ear cress)).